A 290-amino-acid chain; its full sequence is Programmed cell death 1 ligand 1 (290 aa).

The first 18 residues, 1–18, serve as a signal peptide directing secretion; it reads MRIFAGIIFTACCHLLRA. An Ig-like V-type domain is found at 19–127; that stretch reads FTITAPKDLY…YGGADYKRIT (109 aa). Over 19 to 239 the chain is Extracellular; sequence FTITAPKDLY…ATHPPQNRTH (221 aa). The N-linked (GlcNAc...) asparagine glycan is linked to asparagine 35. 2 cysteine pairs are disulfide-bonded: cysteine 40–cysteine 114 and cysteine 154–cysteine 208. Positions 133–224 constitute an Ig-like C2-type domain; it reads PYRKINQRIS…PGQNHTAELI (92 aa). N-linked (GlcNAc...) asparagine glycans are attached at residues asparagine 191, asparagine 199, asparagine 218, and asparagine 236. A helical transmembrane segment spans residues 240–260; that stretch reads WVLLGSILLFLIVVSTVLLFL. Over 261-290 the chain is Cytoplasmic; that stretch reads RKQVRMLDVEKCGVEDTSSKNRNDTQFEET.

The protein belongs to the immunoglobulin superfamily. BTN/MOG family. As to quaternary structure, interacts with PDCD1. Interacts with CMTM4 and CMTM6. Interacts with CD80. Post-translationally, ubiquitinated; STUB1 likely mediates polyubiquitination of PD-L1/CD274 triggering its degradation. Ubiquitinated by MARCHF8; leading to degradation. Deubiquitinated by USP22; leading to stabilization. As to expression, highly expressed in the heart, thymus, skeletal muscle, and lung. Weakly expressed in the kidney, spleen, thyroid, and liver. Expressed on activated dendritic cells, B-cells and macrophages. Expressed in numerous tumor cells lines of lymphoid origin.

It is found in the cell membrane. Its subcellular location is the early endosome membrane. The protein resides in the recycling endosome membrane. Its function is as follows. Plays a critical role in induction and maintenance of immune tolerance to self. As a ligand for the inhibitory receptor PDCD1/PD-1, modulates the activation threshold of T-cells and limits T-cell effector response. Through a yet unknown activating receptor, may costimulate T-cell subsets that predominantly produce interleukin-10 (IL10). In terms of biological role, the PDCD1-mediated inhibitory pathway is exploited by tumors to attenuate anti-tumor immunity and escape destruction by the immune system, thereby facilitating tumor survival. The interaction with PDCD1/PD-1 inhibits cytotoxic T lymphocytes (CTLs) effector function. The blockage of the PDCD1-mediated pathway results in the reversal of the exhausted T-cell phenotype and the normalization of the anti-tumor response, providing a rationale for cancer immunotherapy. This chain is Programmed cell death 1 ligand 1 (Cd274), found in Mus musculus (Mouse).